The primary structure comprises 458 residues: Tyrosine phenol-lyase (458 aa).

Position 258 is an N6-(pyridoxal phosphate)lysine (Lys-258).

This sequence belongs to the beta-eliminating lyase family. In terms of assembly, homotetramer. Pyridoxal 5'-phosphate serves as cofactor.

The enzyme catalyses L-tyrosine + H2O = phenol + pyruvate + NH4(+). This Symbiobacterium thermophilum (strain DSM 24528 / JCM 14929 / IAM 14863 / T) protein is Tyrosine phenol-lyase (tpl).